The primary structure comprises 337 residues: Inositol 2-dehydrogenase (337 aa).

It belongs to the Gfo/Idh/MocA family. As to quaternary structure, homotetramer.

The enzyme catalyses myo-inositol + NAD(+) = scyllo-inosose + NADH + H(+). Involved in the oxidation of myo-inositol (MI) to 2-keto-myo-inositol (2KMI or 2-inosose). The sequence is that of Inositol 2-dehydrogenase from Ralstonia nicotianae (strain ATCC BAA-1114 / GMI1000) (Ralstonia solanacearum).